Consider the following 84-residue polypeptide: Sulfur carrier protein TusA (84 aa).

The active-site Cysteine persulfide intermediate is cysteine 19.

It belongs to the sulfur carrier protein TusA family. Interacts with IscS.

The protein localises to the cytoplasm. It participates in tRNA modification. Its function is as follows. Sulfur carrier protein involved in sulfur trafficking in the cell. Part of a sulfur-relay system required for 2-thiolation during synthesis of 2-thiouridine of the modified wobble base 5-methylaminomethyl-2-thiouridine (mnm(5)s(2)U) in tRNA. Interacts with IscS and stimulates its cysteine desulfurase activity. Accepts an activated sulfur from IscS, which is then transferred to TusD, and thus determines the direction of sulfur flow from IscS to 2-thiouridine formation. Also appears to be involved in sulfur transfer for the biosynthesis of molybdopterin. The protein is Sulfur carrier protein TusA of Yersinia enterocolitica serotype O:8 / biotype 1B (strain NCTC 13174 / 8081).